The primary structure comprises 345 residues: Adenine deaminase (345 aa).

Positions 20, 22, and 204 each coordinate Zn(2+). Glutamate 207 acts as the Proton donor in catalysis. A Zn(2+)-binding site is contributed by aspartate 285. Aspartate 286 is a substrate binding site.

Belongs to the metallo-dependent hydrolases superfamily. Adenosine and AMP deaminases family. Adenine deaminase type 2 subfamily. The cofactor is Zn(2+).

The catalysed reaction is adenine + H2O + H(+) = hypoxanthine + NH4(+). Its function is as follows. Catalyzes the hydrolytic deamination of adenine to hypoxanthine. Plays an important role in the purine salvage pathway and in nitrogen catabolism. This is Adenine deaminase from Ralstonia nicotianae (strain ATCC BAA-1114 / GMI1000) (Ralstonia solanacearum).